The primary structure comprises 731 residues: E3 ubiquitin-protein ligase COP1 (731 aa).

The disordered stretch occupies residues 1–40 (MSGSRQAGSGSAGTSPGSSAASSVTSASSSLSSSPSPPSV). A Nuclear localization signal 1 motif is present at residues 109–113 (GSRKR). An RING-type zinc finger spans residues 136-174 (CPICFDMIEEAYMTKCGHSFCYKCIHQSLEDNNRCPKCN). A Nuclear localization signal 2 motif is present at residues 195–206 (KQKQRFEEKRFK). A coiled-coil region spans residues 233 to 301 (LDLANVNLML…DIKRVEEMSG (69 aa)). The Nuclear export signal motif lies at 235-245 (LANVNLMLELL). The tract at residues 305–325 (PVSEDSTVPQFEAPSPSHSSI) is disordered. WD repeat units follow at residues 419 to 458 (NGSSIVSSIEFDRDCDYFAIAGVTKKIKVYEYDTVIQDAV), 468 to 508 (TCNS…RSKV), 511 to 551 (EHEK…SVAS), 553 to 593 (EAKA…QPIM), 597 to 635 (GHRKAVSYAKFVSGEEIVSASTDSQLKLWNVGKPYCLRS), 638 to 677 (GHINEKNFVGLASNGDYIACGSENNSLYLYYKGLSKTLLT), and 691 to 729 (RKEDDTNEFVSAVCWRALPDGESNVLIAANSQGTIKVLE). Residues 643-645 (KNF) form an interaction with TRIB1 region.

This sequence belongs to the COP1 family. In terms of assembly, homodimer. Homodimerization is mediated by the coiled coil domain. Component of the DCX DET1-COP1 ubiquitin ligase complex at least composed of RBX1, DET1, DDB1, CUL4A and COP1. Isoform 2 does not interact with CUL4A but still binds to RBX1, suggesting that the interaction may be mediated by another cullin protein. Isoform 1 and isoform 2 interact with CUL5 but not with CUL1, CUL2 not CUL3. Interacts with bZIP transcription factors JUN, JUNB and JUND but not with FOS, ATF2 nor XBP1. Interacts with p53 (TP53). Interacts with COPS6; this interaction stabilizes RFWD2 through reducing its auto-ubiquitination and decelerating its turnover rate. Interacts with SFN; this interaction leads to SFN degradation. Isoform 4 forms heterodimers with isoform 1, preventing its association with DET1. Interacts with p53/TP53 and MTA1. Interacts with TRIB1 (via C-terminus) and TRIB2. In terms of processing, autoubiquitinated. MTA1 destabilizes it by promoting its autoubiquitination. In terms of tissue distribution, ubiquitously expressed at low level. Expressed at higher level in testis, placenta, skeletal muscle and heart.

The protein localises to the nucleus speckle. It is found in the cytoplasm. The catalysed reaction is S-ubiquitinyl-[E2 ubiquitin-conjugating enzyme]-L-cysteine + [acceptor protein]-L-lysine = [E2 ubiquitin-conjugating enzyme]-L-cysteine + N(6)-ubiquitinyl-[acceptor protein]-L-lysine.. It participates in protein modification; protein ubiquitination. With respect to regulation, TRIB1 competes with substrates for RFWD2 binding. Functionally, E3 ubiquitin-protein ligase that mediates ubiquitination and subsequent proteasomal degradation of target proteins. E3 ubiquitin ligases accept ubiquitin from an E2 ubiquitin-conjugating enzyme in the form of a thioester and then directly transfers the ubiquitin to targeted substrates. Involved in JUN ubiquitination and degradation. Directly involved in p53 (TP53) ubiquitination and degradation, thereby abolishing p53-dependent transcription and apoptosis. Ubiquitinates p53 independently of MDM2 or RCHY1. Probably mediates E3 ubiquitin ligase activity by functioning as the essential RING domain subunit of larger E3 complexes. In contrast, it does not constitute the catalytic RING subunit in the DCX DET1-COP1 complex that negatively regulates JUN, the ubiquitin ligase activity being mediated by RBX1. Involved in 14-3-3 protein sigma/SFN ubiquitination and proteasomal degradation, leading to AKT activation and promotion of cell survival. Ubiquitinates MTA1 leading to its proteasomal degradation. Upon binding to TRIB1, ubiquitinates CEBPA, which lacks a canonical COP1-binding motif. This chain is E3 ubiquitin-protein ligase COP1, found in Homo sapiens (Human).